The sequence spans 375 residues: Thioredoxin reductase 1, mitochondrial (375 aa).

Residues methionine 1 to phenylalanine 37 constitute a mitochondrion transit peptide. FAD-binding positions include serine 58–alanine 61, phenylalanine 79–glutamate 80, isoleucine 87–glutamine 92, asparagine 101, valine 134, cysteine 192, aspartate 337, and arginine 344–alanine 346. A disulfide bridge connects residues cysteine 189 and cysteine 192.

This sequence belongs to the class-II pyridine nucleotide-disulfide oxidoreductase family. In terms of assembly, homodimer. The cofactor is FAD. In terms of tissue distribution, ubiquitous.

It localises to the cytoplasm. It is found in the mitochondrion. The enzyme catalyses [thioredoxin]-dithiol + NADP(+) = [thioredoxin]-disulfide + NADPH + H(+). Functionally, NADPH-dependent thioredoxin-disulfide reductase that reduces thioredoxins O1, O2 and F3. This Arabidopsis thaliana (Mouse-ear cress) protein is Thioredoxin reductase 1, mitochondrial (NTR1).